The chain runs to 606 residues: Proton myo-inositol cotransporter hmit-1.1 (606 aa).

The Cytoplasmic portion of the chain corresponds to 1–20; that stretch reads MVAVAAFSSSGQDKPAHTPK. The helical transmembrane segment at 21–41 threads the bilayer; that stretch reads LGLFVYILAAASVIGGFLFGY. The Extracellular segment spans residues 42–63; the sequence is DTSVVSAAMLYMPDAPGLKPMD. Residues 64–84 form a helical membrane-spanning segment; sequence TVWQEVLVSISPGMAAVGSLM. The Cytoplasmic portion of the chain corresponds to 85-96; the sequence is SGTSSDYIGRRK. Residues 97–117 form a helical membrane-spanning segment; sequence VILGASAIFTIGALVCAASVN. Residue Lys-118 is a topological domain, extracellular. Residues 119–139 traverse the membrane as a helical segment; that stretch reads IMLLVGRVLLGIAIGFASMIV. The Cytoplasmic segment spans residues 140 to 152; the sequence is PVYLGETAPTHVR. The helical transmembrane segment at 153–173 threads the bilayer; sequence GMLVAAFALMISFGQVVANIT. Residues 174-188 lie on the Extracellular side of the membrane; that stretch reads GGAFSYIDPYNVGWR. The chain crosses the membrane as a helical span at residues 189–209; sequence LMFAFAAVPSIIQFVCFMFLP. Residues 210 to 278 are Cytoplasmic-facing; that stretch reads ETPRWLYENG…RILKTPHVLK (69 aa). Residues 279–299 traverse the membrane as a helical segment; sequence ACFIGSMLQAFQQLAGINTIL. The Extracellular segment spans residues 300–317; sequence YYTADIIRSSGISNNHTT. N-linked (GlcNAc...) asparagine glycosylation occurs at Asn-314. The chain crosses the membrane as a helical span at residues 318 to 338; it reads IWISVLLSLCNFIGPFVPMSL. Topologically, residues 339–345 are cytoplasmic; sequence IEKVGRR. Residues 346–366 form a helical membrane-spanning segment; that stretch reads IIFLFSCGLVVLSLVFIGVAF. The Extracellular segment spans residues 367 to 464; that stretch reads LLVNHDSAAT…EKYYCDTKYT (98 aa). Residues Asn-387 and Asn-445 are each glycosylated (N-linked (GlcNAc...) asparagine). Residues 465-485 traverse the membrane as a helical segment; it reads LLPIIACGVYLLTFSSGFTSL. The Cytoplasmic portion of the chain corresponds to 486 to 501; sequence PWVLNSEFYPMWARST. The chain crosses the membrane as a helical span at residues 502-522; sequence CVAISTTSNWVFNLIIALTYL. The Extracellular segment spans residues 523–531; sequence SLTQVIGKY. The chain crosses the membrane as a helical span at residues 532 to 552; sequence GAFWLYAGLTVIAFIFILFLV. Over 553 to 606 the chain is Cytoplasmic; that stretch reads PETKGYSIEEVEMLFMNKKQRREAESRRRETVTEVRSRMNSTVSFGQHNEVHKY.

The protein belongs to the major facilitator superfamily. Sugar transporter (TC 2.A.1.1) family. Expressed in the intestine.

It localises to the cell membrane. It carries out the reaction myo-inositol(out) + H(+)(out) = myo-inositol(in) + H(+)(in). Functionally, h(+)-myo-inositol cotransporter. Probably by promoting the transport of myo-inositol regulates intracellular osmosis in response to hyperosmotic stress. This Caenorhabditis elegans protein is Proton myo-inositol cotransporter hmit-1.1.